Here is a 452-residue protein sequence, read N- to C-terminus: Neuromedin-K receptor (452 aa).

Topologically, residues 1-71 (MASVPRGENW…TNQFVQPSWR (71 aa)) are extracellular. Asn-9, Asn-23, Asn-40, and Asn-60 each carry an N-linked (GlcNAc...) asparagine glycan. The helical transmembrane segment at 72-94 (IALWSLAYGLVVAVAVFGNLIVI) threads the bilayer. Over 95-104 (WIILAHKRMR) the chain is Cytoplasmic. A helical transmembrane segment spans residues 105-126 (TVTNYFLVNLAFSDASVAAFNT). At 127-146 (LINFIYGLHSEWYFGANYCR) the chain is on the extracellular side. Residues Cys-145 and Cys-220 are joined by a disulfide bond. Residues 147–168 (FQNFFPITAVFASIYSMTAIAV) form a helical membrane-spanning segment. At 169–188 (DRYMAIIDPLKPRLSATATK) the chain is on the cytoplasmic side. The chain crosses the membrane as a helical span at residues 189-209 (IVIGSIWILAFLLAFPQCLYS). Residues 210–232 (KIKVMPGRTLCYVQWPEGPKQHF) lie on the Extracellular side of the membrane. Residues 233–257 (TYHIIVIILVYCFPLLIMGVTYTIV) form a helical membrane-spanning segment. Topologically, residues 258-286 (GITLWGGEIPGDTCDKYHEQLKAKRKVVK) are cytoplasmic. Residues 287–308 (MMIIVVVTFAICWLPYHVYFIL) traverse the membrane as a helical segment. Over 309-321 (TAIYQQLNRWKYI) the chain is Extracellular. Residues 322 to 346 (QQVYLASFWLAMSSTMYNPIIYCCL) form a helical membrane-spanning segment. Topologically, residues 347 to 452 (NKRFRAGFKR…SPYTSVDEYS (106 aa)) are cytoplasmic. Cys-361 is lipidated: S-palmitoyl cysteine. Residues 400-452 (FDPNDGDPTKSSRKKRAVPRDPSANGCSHRGSKSASTTSSFISSPYTSVDEYS) form a disordered region. Residues 432–452 (KSASTTSSFISSPYTSVDEYS) are compositionally biased toward low complexity.

This sequence belongs to the G-protein coupled receptor 1 family. Post-translationally, the anchoring of this receptor to the plasma membrane is probably mediated by the palmitoylation of a cysteine residue.

Its subcellular location is the cell membrane. In terms of biological role, this is a receptor for the tachykinin neuropeptide neuromedin-K (neurokinin B). It is associated with G proteins that activate a phosphatidylinositol-calcium second messenger system. The rank order of affinity of this receptor to tachykinins is: neuromedin-K &gt; substance K &gt; substance P. The polypeptide is Neuromedin-K receptor (Tacr3) (Rattus norvegicus (Rat)).